Here is a 393-residue protein sequence, read N- to C-terminus: tRNA(Met) cytidine acetate ligase (393 aa).

Residues Gly-81, Asn-142, and Arg-167 each contribute to the ATP site.

The protein belongs to the TmcAL family.

It localises to the cytoplasm. It carries out the reaction cytidine(34) in elongator tRNA(Met) + acetate + ATP = N(4)-acetylcytidine(34) in elongator tRNA(Met) + AMP + diphosphate. Its function is as follows. Catalyzes the formation of N(4)-acetylcytidine (ac(4)C) at the wobble position of elongator tRNA(Met), using acetate and ATP as substrates. First activates an acetate ion to form acetyladenylate (Ac-AMP) and then transfers the acetyl group to tRNA to form ac(4)C34. The chain is tRNA(Met) cytidine acetate ligase from Bacillus thuringiensis subsp. konkukian (strain 97-27).